Reading from the N-terminus, the 579-residue chain is Adenine deaminase (579 aa).

The protein belongs to the metallo-dependent hydrolases superfamily. Adenine deaminase family. Requires Mn(2+) as cofactor.

It carries out the reaction adenine + H2O + H(+) = hypoxanthine + NH4(+). This Listeria monocytogenes serotype 4b (strain F2365) protein is Adenine deaminase.